A 475-amino-acid polypeptide reads, in one-letter code: Equilibrative nucleoside transporter 3 (475 aa).

The disordered stretch occupies residues 1–24 (MAVVSEDDFQHSSNSTYRTTSSSL). The Cytoplasmic segment spans residues 1–53 (MAVVSEDDFQHSSNSTYRTTSSSLRADQEALLEKLLDRPPPGLQRPEDRFCGT). The span at 12-23 (SSNSTYRTTSSS) shows a compositional bias: low complexity. 2 positions are modified to phosphoserine: Ser-21 and Ser-23. The Dileucine internalization motif motif lies at 31–32 (LL). Residues 54–74 (YIIFFSLGIGSLLPWNFFITA) form a helical membrane-spanning segment. Topologically, residues 75 to 105 (KEYWMFKLRNSSSPATGEDPEGSDILNYFES) are extracellular. A glycan (N-linked (GlcNAc...) asparagine) is linked at Asn-84. The chain crosses the membrane as a helical span at residues 106-126 (YLAVASTVPSMLCLVANFLLV). The Cytoplasmic portion of the chain corresponds to 127-134 (NRVAVHIR). Residues 135–155 (VLASLTVILAIFMVITALVKV) traverse the membrane as a helical segment. The Extracellular portion of the chain corresponds to 156–162 (DTSSWTR). Residues 163 to 183 (GFFAVTIVCMVILSGASTVFS) form a helical membrane-spanning segment. The Cytoplasmic segment spans residues 184–199 (SSIYGMTGSFPMRNSQ). Residues 200–220 (ALISGGAMGGTVSAVASLVDL) form a helical membrane-spanning segment. At 221–230 (AASSDVRNSA) the chain is on the extracellular side. A helical transmembrane segment spans residues 231–251 (LAFFLTATVFLVLCMGLYLLL). Topologically, residues 252-305 (SRLEYARYYMRPVLAAHVFSGEEELPQDSLSAPSVASRFIDSHTPPLRPILKKT) are cytoplasmic. Residues 306-326 (ASLGFCVTYVFFITSLIYPAI) traverse the membrane as a helical segment. Residues 327 to 337 (CTNIESLNKGS) are Extracellular-facing. A helical membrane pass occupies residues 338–358 (GSLWTTKFFIPLTTFLLYNFA). The Cytoplasmic portion of the chain corresponds to 359-377 (DLCGRQLTAWIQVPGPNSK). A helical membrane pass occupies residues 378-398 (ALPGFVLLRTCLIPLFVLCNY). Over 399–415 (QPRVHLKTVVFQSDVYP) the chain is Extracellular. The helical transmembrane segment at 416-436 (ALLSSLLGLSNGYLSTLALLY) threads the bilayer. Over 437 to 454 (GPKIVPRELAEATGVVMS) the chain is Cytoplasmic. The chain crosses the membrane as a helical span at residues 455–475 (FYVCLGLTLGSACSTLLVHLI).

The protein belongs to the SLC29A/ENT transporter (TC 2.A.57) family. In terms of tissue distribution, widely expressed in both adult and fetal tissues. Highest levels in placenta, uterus, ovary, spleen, lymph node and bone marrow. Expressed in liver. Lowest levels in brain and heart. Expressed in macrophages.

The protein resides in the lysosome membrane. The protein localises to the late endosome membrane. It is found in the mitochondrion membrane. Its subcellular location is the cell membrane. The enzyme catalyses adenosine(in) = adenosine(out). The catalysed reaction is guanosine(in) = guanosine(out). It catalyses the reaction inosine(in) = inosine(out). It carries out the reaction uridine(out) = uridine(in). The enzyme catalyses cytidine(in) = cytidine(out). The catalysed reaction is thymidine(in) = thymidine(out). It catalyses the reaction 2'-deoxyadenosine(in) = 2'-deoxyadenosine(out). It carries out the reaction 2'-deoxycytidine(in) = 2'-deoxycytidine(out). The enzyme catalyses guanine(out) = guanine(in). The catalysed reaction is uracil(in) = uracil(out). It catalyses the reaction (R)-noradrenaline(out) = (R)-noradrenaline(in). It carries out the reaction dopamine(out) = dopamine(in). The enzyme catalyses serotonin(out) = serotonin(in). The catalysed reaction is tyramine(in) = tyramine(out). It catalyses the reaction ATP(in) = ATP(out). In terms of biological role, uniporter that mediates the facilitative transport of nucleoside across lysosomal and mitochondrial membranes. Functions as a non-electrogenic Na(+)-independent transporter. Substrate transport is pH-dependent and enhanced under acidic condition, probably reflecting the location of the transporter in acidic intracellular compartments. Proton is not a cotransporting ion but most likely change the ionization state of the transporter which dictates transport-permissible/impermissible conformation for nucleoside translocation. May direct the nucleoside transport from lysosomes to cytosol or cytosol to mitochondria to facilitate the fundamental function of salvage synthesis of nucleic acids. Involved in the transport of nucleosides (adenosine, guanosine, uridine, thymidine, cytidine and inosine) and deoxynucleosides (deoxyadenosine, deoxycytidine). Also mediates transport of purine nucleobases (adenine, guanine) and pyrimidine nucleobases (uracil). Also able to transport monoamine neurotransmitters dopamine, serotonin, noradrenaline and tyramine. Capable of transporting ATP. Mediates nucleoside export from lysosomes in macrophages, which regulates macrophage functions and numbers. This is Equilibrative nucleoside transporter 3 from Homo sapiens (Human).